Here is a 325-residue protein sequence, read N- to C-terminus: Tagatose 1,6-diphosphate aldolase (325 aa).

The protein belongs to the aldolase LacD family.

It carries out the reaction D-tagatofuranose 1,6-bisphosphate = D-glyceraldehyde 3-phosphate + dihydroxyacetone phosphate. The protein operates within carbohydrate metabolism; D-tagatose 6-phosphate degradation; D-glyceraldehyde 3-phosphate and glycerone phosphate from D-tagatose 6-phosphate: step 2/2. The protein is Tagatose 1,6-diphosphate aldolase of Staphylococcus epidermidis (strain ATCC 35984 / DSM 28319 / BCRC 17069 / CCUG 31568 / BM 3577 / RP62A).